Here is a 387-residue protein sequence, read N- to C-terminus: MSQQQTLPVTLPPALSQELLKTVPPPANTQQDQMKQPTPSPAPCQKGPSELPVEKHPAPVKQVPEQECEPQQQDHQEPELQLGRKQQEPQEQEVHPGKQQQKPQEQEAHLGKKQEPQGQEVHLGKQQQKTQEQEVHLGKQQQELQEQEVHLEKQLQEPQEVHLEKQLQEQEVHLEKQLQEPEPELNLGKQQQEPQEQEAYLGKQQQELPEPQDPELHLGKQQQEPQEQEVQLEKQQEAQEQELHLGKQQQESQEQELHLRKLQQVPQEPQDQELHLGKQQQELQEQEVHLGKQLQEPQEQELHLGRQQQELQEEEVHLGMKEEQLLKHVEQQEGQLEQQEGQLKQPVCIPTPGQVQDIQPAQPPKGEVLLPTEKQQKQEVQWPLKQE.

Disordered regions lie at residues 1–319 (MSQQ…VHLG) and 347–387 (VCIP…LKQE). The segment covering 28 to 37 (NTQQDQMKQP) has biased composition (polar residues). The segment covering 62–71 (QVPEQECEPQ) has biased composition (low complexity). Basic and acidic residues-rich tracts occupy residues 85 to 96 (KQQEPQEQEVHP), 104 to 115 (QEQEAHLGKKQE), 147 to 179 (QEVH…KQLQ), and 231 to 245 (QLEK…ELHL).

The protein belongs to the involucrin family. As to quaternary structure, directly or indirectly cross-linked to cornifelin (CNFN). In terms of processing, substrate of transglutaminase. Specific glutamines or lysines are cross-linked to keratins, desmoplakin and to inter involucrin molecules. In terms of tissue distribution, keratinocytes of epidermis and other stratified squamous epithelia.

The protein resides in the cytoplasm. Functionally, part of the insoluble cornified cell envelope (CE) of stratified squamous epithelia. This is Involucrin (IVL) from Cephalopachus bancanus (Western tarsier).